We begin with the raw amino-acid sequence, 188 residues long: UPF0398 protein SSP1297 (188 aa).

The protein belongs to the UPF0398 family.

The protein is UPF0398 protein SSP1297 of Staphylococcus saprophyticus subsp. saprophyticus (strain ATCC 15305 / DSM 20229 / NCIMB 8711 / NCTC 7292 / S-41).